The following is a 217-amino-acid chain: Probable glutathione S-transferase DHAR4 (217 aa).

Residues K8 and D19 each coordinate glutathione. The L-ascorbate site is built by K8 and D19. One can recognise a GST N-terminal domain in the interval 10–85 (ASGAPDVLGD…DLIVGIIEEK (76 aa)). Catalysis depends on C20, which acts as the Nucleophile. Positions 20 to 25 (CPFGQR) match the Glutathione-binding motif. Glutathione is bound by residues K47, S75, H164, and W211. The 132-residue stretch at 86-217 (YPEPSLVTFP…IASWAPKLDV (132 aa)) folds into the GST C-terminal domain. K214 is an L-ascorbate binding site.

It belongs to the GST superfamily. DHAR family. In terms of assembly, monomer.

Its subcellular location is the cytoplasm. The protein localises to the cytosol. It catalyses the reaction RX + glutathione = an S-substituted glutathione + a halide anion + H(+). The enzyme catalyses L-dehydroascorbate + 2 glutathione = glutathione disulfide + L-ascorbate. In terms of biological role, exhibits glutathione-dependent thiol transferase and dehydroascorbate (DHA) reductase activities. The chain is Probable glutathione S-transferase DHAR4 (DHAR4) from Arabidopsis thaliana (Mouse-ear cress).